Here is a 331-residue protein sequence, read N- to C-terminus: Thiamine thiazole synthase (331 aa).

Residues cysteine 86, glutamate 107–alanine 108, glycine 115, and valine 183 contribute to the substrate site. Residue cysteine 220 is modified to 2,3-didehydroalanine (Cys). Substrate contacts are provided by residues aspartate 222, histidine 237, methionine 289, and arginine 299–glycine 301.

Belongs to the THI4 family. As to quaternary structure, homooctamer. The cofactor is Fe cation. Post-translationally, during the catalytic reaction, a sulfide is transferred from Cys-220 to a reaction intermediate, generating a dehydroalanine residue.

It is found in the cytoplasm. It localises to the nucleus. The catalysed reaction is [ADP-thiazole synthase]-L-cysteine + glycine + NAD(+) = [ADP-thiazole synthase]-dehydroalanine + ADP-5-ethyl-4-methylthiazole-2-carboxylate + nicotinamide + 3 H2O + 2 H(+). Its function is as follows. Involved in biosynthesis of the thiamine precursor thiazole. Catalyzes the conversion of NAD and glycine to adenosine diphosphate 5-(2-hydroxyethyl)-4-methylthiazole-2-carboxylic acid (ADT), an adenylated thiazole intermediate. The reaction includes an iron-dependent sulfide transfer from a conserved cysteine residue of the protein to a thiazole intermediate. The enzyme can only undergo a single turnover, which suggests it is a suicide enzyme. May have additional roles in adaptation to various stress conditions and in DNA damage tolerance. In Emericella nidulans (strain FGSC A4 / ATCC 38163 / CBS 112.46 / NRRL 194 / M139) (Aspergillus nidulans), this protein is Thiamine thiazole synthase.